We begin with the raw amino-acid sequence, 284 residues long: NAD/NADP-dependent indole-3-acetaldehyde reductase (284 aa).

An NADPH-binding site is contributed by Asp49. Catalysis depends on proton donor residues Tyr54 and His109. 10 residues coordinate NADPH: Ser143, Gln165, Leu196, Arg201, Thr239, Thr240, Thr241, Ser242, Lys243, and Arg246.

The protein belongs to the aldo/keto reductase family. Monomer.

Its subcellular location is the cytoplasm. It is found in the nucleus. It catalyses the reaction indole-3-ethanol + NAD(+) = indole-3-acetaldehyde + NADH + H(+). It carries out the reaction indole-3-ethanol + NADP(+) = indole-3-acetaldehyde + NADPH + H(+). The chain is NAD/NADP-dependent indole-3-acetaldehyde reductase from Schizosaccharomyces pombe (strain 972 / ATCC 24843) (Fission yeast).